A 396-amino-acid chain; its full sequence is Flap endonuclease 1 (396 aa).

An N-domain region spans residues 1–105 (MGIHGLTKLL…DQLAQRTERR (105 aa)). Position 34 (aspartate 34) interacts with Mg(2+). Arginine 71 contacts DNA. Mg(2+) contacts are provided by aspartate 87, glutamate 159, glutamate 161, aspartate 180, and aspartate 182. Residues 123 to 254 (AIEKYSKRSV…VRALQMIKKH (132 aa)) are I-domain. DNA is bound at residue glutamate 159. DNA-binding residues include glycine 232 and aspartate 234. Residue aspartate 234 coordinates Mg(2+). Residues 338–346 (NQGRLESFF) are interaction with PCNA. Positions 341–396 (RLESFFTSLPKPATADKAKPKEDDKKRKAGAAAGGKDAKGGAAAKKGKFGVGGGKK) are disordered. Residues 354 to 366 (TADKAKPKEDDKK) show a composition bias toward basic and acidic residues. Low complexity predominate over residues 370 to 384 (GAAAGGKDAKGGAAA).

The protein belongs to the XPG/RAD2 endonuclease family. FEN1 subfamily. Interacts with PCNA. Three molecules of FEN1 bind to one PCNA trimer with each molecule binding to one PCNA monomer. PCNA stimulates the nuclease activity without altering cleavage specificity. Mg(2+) serves as cofactor. Phosphorylated. Phosphorylation upon DNA damage induces relocalization to the nuclear plasma.

Its subcellular location is the nucleus. It localises to the nucleolus. The protein resides in the nucleoplasm. The protein localises to the mitochondrion. Structure-specific nuclease with 5'-flap endonuclease and 5'-3' exonuclease activities involved in DNA replication and repair. During DNA replication, cleaves the 5'-overhanging flap structure that is generated by displacement synthesis when DNA polymerase encounters the 5'-end of a downstream Okazaki fragment. It enters the flap from the 5'-end and then tracks to cleave the flap base, leaving a nick for ligation. Also involved in the long patch base excision repair (LP-BER) pathway, by cleaving within the apurinic/apyrimidinic (AP) site-terminated flap. Acts as a genome stabilization factor that prevents flaps from equilibrating into structures that lead to duplications and deletions. Also possesses 5'-3' exonuclease activity on nicked or gapped double-stranded DNA, and exhibits RNase H activity. Also involved in replication and repair of rDNA and in repairing mitochondrial DNA. The sequence is that of Flap endonuclease 1 from Chlamydomonas reinhardtii (Chlamydomonas smithii).